Here is a 346-residue protein sequence, read N- to C-terminus: Serine/threonine-protein phosphatase PP1(4.8) (346 aa).

The disordered stretch occupies residues 46–65 (QSAQTQESTPKTNGTGRATT). Mn(2+)-binding residues include D102, H104, D130, and N162. H163 functions as the Proton donor in the catalytic mechanism. Positions 211 and 287 each coordinate Mn(2+).

The protein belongs to the PPP phosphatase family. PP-1 subfamily. Mn(2+) is required as a cofactor.

It carries out the reaction O-phospho-L-seryl-[protein] + H2O = L-seryl-[protein] + phosphate. The catalysed reaction is O-phospho-L-threonyl-[protein] + H2O = L-threonyl-[protein] + phosphate. In Trypanosoma brucei brucei, this protein is Serine/threonine-protein phosphatase PP1(4.8).